We begin with the raw amino-acid sequence, 665 residues long: Fructose-1,6-bisphosphatase class 3 (665 aa).

It belongs to the FBPase class 3 family. Mn(2+) serves as cofactor.

It carries out the reaction beta-D-fructose 1,6-bisphosphate + H2O = beta-D-fructose 6-phosphate + phosphate. The protein operates within carbohydrate biosynthesis; gluconeogenesis. The sequence is that of Fructose-1,6-bisphosphatase class 3 from Alkaliphilus metalliredigens (strain QYMF).